The chain runs to 287 residues: Merozoite surface protein 2 (287 aa).

The N-terminal stretch at 1–20 is a signal peptide; sequence MKVIKTLSIINFFIFVTFNI. Asparagine 22 and asparagine 36 each carry an N-linked (GlcNAc...) asparagine glycan. The interval 42–248 is disordered; sequence SMTESNPPTG…DSQKECTDGN (207 aa). A polymorphic region region spans residues 44–213; it reads TESNPPTGAS…EQTESPELQS (170 aa). Residues 54 to 112 show a composition bias toward gly residues; it reads GSAGGSAGGSAGGSAGGSAGGSAGGSAGGSAGGSAGGSAGGSAGGSAGGSAGSGDGNGA. 12 tandem repeats follow at residues 55-58, 59-62, 63-66, 67-70, 71-74, 75-78, 79-82, 83-86, 87-90, 91-94, 95-98, and 99-102. The 12 X 4 AA tandem repeats of S-A-G-G stretch occupies residues 55-102; it reads SAGGSAGGSAGGSAGGSAGGSAGGSAGGSAGGSAGGSAGGSAGGSAGG. Residues 121-149 are compositionally biased toward low complexity; it reads SPSTPATTTTTTTTNDAEASTSTSSENPN. 2 stretches are compositionally biased toward polar residues: residues 150 to 180 and 187 to 215; these read HNNAETNQANKETQNNSNVQQDSQTKSNVPP and KSPTAQPEQAENSAPTAEQTESPELQSAP. N-linked (GlcNAc...) asparagine glycosylation is present at asparagine 164. An N-linked (GlcNAc...) asparagine glycan is attached at asparagine 236. A disulfide bridge connects residues cysteine 244 and cysteine 252. N-linked (GlcNAc...) asparagine glycans are attached at residues asparagine 260 and asparagine 261. Residue asparagine 261 is the site of GPI-anchor amidated asparagine attachment. Residues 262–287 constitute a propeptide, removed in mature form; sequence SSNIASINKFVVLISATLVLSFAIFI.

The protein resides in the cell membrane. Its function is as follows. May play a role in the merozoite attachment to the erythrocyte. This Plasmodium falciparum (isolate FCR-3 / Gambia) protein is Merozoite surface protein 2.